The chain runs to 256 residues: Fibroblast growth factor 3 (256 aa).

The N-terminal stretch at 1–18 (MVIILLLLLLSFLDPSLE) is a signal peptide. 3 disordered regions span residues 31 to 54 (APCA…GGVY), 151 to 176 (RHHA…SSKR), and 219 to 256 (LRES…RADI). Residues 238–256 (ERRRRRHRGSKGHNRRADI) show a composition bias toward basic residues.

It belongs to the heparin-binding growth factors family.

It is found in the secreted. Plays an important role in the regulation of embryonic development, cell proliferation, and cell differentiation. This chain is Fibroblast growth factor 3 (fgf3), found in Danio rerio (Zebrafish).